Consider the following 380-residue polypeptide: MIQQAQFNVQMAEEDRWLTQYPNMEMIVNNKGPKPIFPELNFNITGLEEKSRYVVLLSIQKFDNIRYGFKNGKWGPSKVRHATKKEQEIKYFLHPDGTKLGEELMKETIKFDTVRITNHKKFMDKDNVFFVETMHKYVPVLTVKNITNVESANHSMRMEVAQFFPVTVYNQESIGNWKSKFHKNATFENRLDGGNKRKNTNSREEPSSKRSKNETEIAVLDILQVASQSENYNESTNSGRLQNEISSSIHQFPSTSYQNQYPHAYPTVNTPPIYAQQFPAPFDEKQNQFYPKTDENLAPNCAQDASSLPNFAMNQKASFANQYPYHPYYHQYSQLDHGSPYQYMNNSINSDSSFQSSFSTENSYFDDNGNPIHYPYYPYK.

Positions 11–192 form a DNA-binding region, T-box; that stretch reads MAEEDRWLTQ…KNATFENRLD (182 aa). The tract at residues 188–215 is disordered; sequence ENRLDGGNKRKNTNSREEPSSKRSKNET. Positions 189–215 are enriched in basic and acidic residues; sequence NRLDGGNKRKNTNSREEPSSKRSKNET.

The protein localises to the nucleus. The chain is Putative T-box protein 40 (tbx-40) from Caenorhabditis elegans.